Consider the following 206-residue polypeptide: LexA repressor (206 aa).

The segment at residues 28–48 (RAEIATRLGFKSANAAEEHLK) is a DNA-binding region (H-T-H motif). Active-site for autocatalytic cleavage activity residues include Ser123 and Lys160.

This sequence belongs to the peptidase S24 family. Homodimer.

The catalysed reaction is Hydrolysis of Ala-|-Gly bond in repressor LexA.. In terms of biological role, represses a number of genes involved in the response to DNA damage (SOS response), including recA and lexA. In the presence of single-stranded DNA, RecA interacts with LexA causing an autocatalytic cleavage which disrupts the DNA-binding part of LexA, leading to derepression of the SOS regulon and eventually DNA repair. The sequence is that of LexA repressor from Shewanella sp. (strain ANA-3).